A 189-amino-acid chain; its full sequence is GMP synthase [glutamine-hydrolyzing] subunit A (189 aa).

The region spanning 3-187 (RIDVIDNHGQ…LSVCDQQSVA (185 aa)) is the Glutamine amidotransferase type-1 domain. Cys73 (nucleophile) is an active-site residue. Active-site residues include His161 and Glu163.

Heterodimer composed of a glutamine amidotransferase subunit (A) and a GMP-binding subunit (B).

It catalyses the reaction XMP + L-glutamine + ATP + H2O = GMP + L-glutamate + AMP + diphosphate + 2 H(+). The protein operates within purine metabolism; GMP biosynthesis; GMP from XMP (L-Gln route): step 1/1. Functionally, catalyzes the synthesis of GMP from XMP. In Haloarcula marismortui (strain ATCC 43049 / DSM 3752 / JCM 8966 / VKM B-1809) (Halobacterium marismortui), this protein is GMP synthase [glutamine-hydrolyzing] subunit A.